Here is a 332-residue protein sequence, read N- to C-terminus: MVQVAVMGAGSWGTTVAKVFADAGNEVRLWARRAEVAEDVRDNHRNSAYLGDIELPAALTGTTDPAEALNGAEIVVLGVPSQSLRENLQNWKDLIGPDASLVSLAKGIEHSSGLRMSQLVSEVADVPSERVAVLTGPNLAREVAQGQPAATVVACTDMDRAKLIQAAVAAPYFRPYTNTDVIGCEIAGTCKNVIALAAGIAAGMGFGDNTAATVITRGLAETTRLALEVGADARTLSGLAGMGDLVATCTSTLSRNRRFGEHLGKGETLEQAAASTKGQVAEGVVSSQSVFELAEKVGVETPITEAVVGVCHEGADVQQIMMGLLGRSKKAE.

NADPH contacts are provided by S11, W12, R32, R33, and K106. Residues K106 and G136 each coordinate sn-glycerol 3-phosphate. NADPH is bound at residue A140. The sn-glycerol 3-phosphate site is built by K191, D244, S254, R255, and N256. The active-site Proton acceptor is the K191. Residue R255 participates in NADPH binding. 2 residues coordinate NADPH: V280 and E282.

Belongs to the NAD-dependent glycerol-3-phosphate dehydrogenase family.

It localises to the cytoplasm. It catalyses the reaction sn-glycerol 3-phosphate + NAD(+) = dihydroxyacetone phosphate + NADH + H(+). The enzyme catalyses sn-glycerol 3-phosphate + NADP(+) = dihydroxyacetone phosphate + NADPH + H(+). Its pathway is membrane lipid metabolism; glycerophospholipid metabolism. In terms of biological role, catalyzes the reduction of the glycolytic intermediate dihydroxyacetone phosphate (DHAP) to sn-glycerol 3-phosphate (G3P), the key precursor for phospholipid synthesis. This Corynebacterium jeikeium (strain K411) protein is Glycerol-3-phosphate dehydrogenase [NAD(P)+].